We begin with the raw amino-acid sequence, 253 residues long: Short-chain dehydrogenase/reductase ATR9 (253 aa).

NADP(+) contacts are provided by Ser15, Ser16, Ile18, Ser38, Asn39, Arg42, Asp65, and Lys129. The Proton donor role is filled by Ser147. Thr194 contacts NADP(+).

This sequence belongs to the short-chain dehydrogenases/reductases (SDR) family.

It functions in the pathway mycotoxin biosynthesis. In terms of biological role, short-chain dehydrogenase/reductase; part of the core atranone cluster (CAC) which products are predicted to catalyze most or all steps of mycotoxin atranone synthesis, starting from geranylgeranyl pyrophosphate (GGPP). The initial cyclization of GGPP to dolabellane is probably performed by the terpene cyclase ATR13. The Baeyer-Villiger oxidation near the end of the atranone synthesis, which converts atranones D and E to atranones F and G is predicted to be catalyzed by the monooxygenase ATR8. Of the CAC's other predicted gene products, the reducing PKS ATR6 might synthesize a polyketide chain. This polyketide is probably transferred onto the atranone backbone by the polyketide transferase ATR5. Other predicted CAC products include 4 oxygenases (ATR2, ATR3, ATR4, and ATR14), 3 short-chain reductases (ATR7, ATR9, and ATR10), and a methyltransferase (ATR12). These may all be involved in the various steps of atranone biosynthesis, although their specific roles must await experimental determination. The polypeptide is Short-chain dehydrogenase/reductase ATR9 (Stachybotrys chlorohalonatus (strain IBT 40285)).